The chain runs to 248 residues: Probable transcriptional regulatory protein FTW_1073 (248 aa).

The protein belongs to the TACO1 family.

The protein resides in the cytoplasm. The protein is Probable transcriptional regulatory protein FTW_1073 of Francisella tularensis subsp. tularensis (strain WY96-3418).